The following is a 345-amino-acid chain: Anthranilate phosphoribosyltransferase (345 aa).

5-phospho-alpha-D-ribose 1-diphosphate-binding positions include Gly-84, 87–88 (GD), Thr-92, 94–97 (NVTT), 112–120 (KHGNRSVSS), and Ser-124. Gly-84 serves as a coordination point for anthranilate. Residue Thr-96 coordinates Mg(2+). An anthranilate-binding site is contributed by Asn-115. Arg-170 contributes to the anthranilate binding site. The Mg(2+) site is built by Asp-228 and Glu-229.

Belongs to the anthranilate phosphoribosyltransferase family. In terms of assembly, homodimer. The cofactor is Mg(2+).

It carries out the reaction N-(5-phospho-beta-D-ribosyl)anthranilate + diphosphate = 5-phospho-alpha-D-ribose 1-diphosphate + anthranilate. It participates in amino-acid biosynthesis; L-tryptophan biosynthesis; L-tryptophan from chorismate: step 2/5. Functionally, catalyzes the transfer of the phosphoribosyl group of 5-phosphorylribose-1-pyrophosphate (PRPP) to anthranilate to yield N-(5'-phosphoribosyl)-anthranilate (PRA). The polypeptide is Anthranilate phosphoribosyltransferase (Corynebacterium aurimucosum (strain ATCC 700975 / DSM 44827 / CIP 107346 / CN-1) (Corynebacterium nigricans)).